We begin with the raw amino-acid sequence, 159 residues long: Short coiled-coil protein (159 aa).

Residues Met78–Ser146 are a coiled coil.

Belongs to the SCOC family. In terms of assembly, homodimer. Interacts with ARL1, ARL2 and ARL3. Directly interacts with FEZ1 and UVRAG. The interaction with UVRAG is reduced by amino acid starvation, but the complex is stabilized in the presence of FEZ1. Interacts with NRBF2. As to expression, widely expressed with highest levels in brain, heart and skeletal muscle.

The protein localises to the golgi apparatus membrane. Its subcellular location is the golgi apparatus. It is found in the trans-Golgi network. The protein resides in the cytoplasm. It localises to the cytosol. Its function is as follows. Positive regulator of amino acid starvation-induced autophagy. The sequence is that of Short coiled-coil protein (SCOC) from Homo sapiens (Human).